A 201-amino-acid polypeptide reads, in one-letter code: NADH-quinone oxidoreductase subunit C (201 aa).

Belongs to the complex I 30 kDa subunit family. In terms of assembly, NDH-1 is composed of 14 different subunits. Subunits NuoB, C, D, E, F, and G constitute the peripheral sector of the complex.

It is found in the cell inner membrane. The catalysed reaction is a quinone + NADH + 5 H(+)(in) = a quinol + NAD(+) + 4 H(+)(out). In terms of biological role, NDH-1 shuttles electrons from NADH, via FMN and iron-sulfur (Fe-S) centers, to quinones in the respiratory chain. The immediate electron acceptor for the enzyme in this species is believed to be ubiquinone. Couples the redox reaction to proton translocation (for every two electrons transferred, four hydrogen ions are translocated across the cytoplasmic membrane), and thus conserves the redox energy in a proton gradient. In Azoarcus sp. (strain BH72), this protein is NADH-quinone oxidoreductase subunit C.